Consider the following 386-residue polypeptide: Succinate--CoA ligase [ADP-forming] subunit beta (386 aa).

An ATP-grasp domain is found at 9–244 (KELLRKYGVV…FDEEDADEIE (236 aa)). Residues Lys-46, 53-55 (GRG), Glu-99, Ala-102, and Glu-107 each bind ATP. Residues Asn-199 and Asp-213 each contribute to the Mg(2+) site. Substrate-binding positions include Asn-264 and 321–323 (GIM).

The protein belongs to the succinate/malate CoA ligase beta subunit family. In terms of assembly, heterotetramer of two alpha and two beta subunits. Mg(2+) serves as cofactor.

It carries out the reaction succinate + ATP + CoA = succinyl-CoA + ADP + phosphate. It catalyses the reaction GTP + succinate + CoA = succinyl-CoA + GDP + phosphate. It functions in the pathway carbohydrate metabolism; tricarboxylic acid cycle; succinate from succinyl-CoA (ligase route): step 1/1. Functionally, succinyl-CoA synthetase functions in the citric acid cycle (TCA), coupling the hydrolysis of succinyl-CoA to the synthesis of either ATP or GTP and thus represents the only step of substrate-level phosphorylation in the TCA. The beta subunit provides nucleotide specificity of the enzyme and binds the substrate succinate, while the binding sites for coenzyme A and phosphate are found in the alpha subunit. The sequence is that of Succinate--CoA ligase [ADP-forming] subunit beta from Aromatoleum aromaticum (strain DSM 19018 / LMG 30748 / EbN1) (Azoarcus sp. (strain EbN1)).